A 467-amino-acid polypeptide reads, in one-letter code: Tubulointerstitial nephritis antigen-like (467 aa).

Positions Met-1–Ala-21 are cleaved as a signal peptide. The region spanning Glu-49–Pro-96 is the SMB domain. 5 cysteine pairs are disulfide-bonded: Cys-53–Cys-72, Cys-70–Cys-72, Cys-70–Cys-84, Cys-76–Cys-83, and Cys-84–Cys-91. Asn-77 is a glycosylation site (N-linked (GlcNAc...) asparagine). The N-linked (GlcNAc...) asparagine glycan is linked to Asn-160.

The protein belongs to the peptidase C1 family. Post-translationally, glycosylated.

It localises to the secreted. Functionally, may be implicated in the adrenocortical zonation and in mechanisms for repressing the CYP11B1 gene expression in adrenocortical cells. This is a non catalytic peptidase C1 family protein. The protein is Tubulointerstitial nephritis antigen-like (Tinagl1) of Rattus norvegicus (Rat).